The sequence spans 196 residues: dITP/XTP pyrophosphatase (196 aa).

Thr-10 to Lys-15 provides a ligand contact to substrate. Asp-68 acts as the Proton acceptor in catalysis. Asp-68 is a Mg(2+) binding site. Substrate is bound by residues Ser-69, Phe-148–Asp-151, and His-175–Arg-176.

Belongs to the HAM1 NTPase family. In terms of assembly, homodimer. It depends on Mg(2+) as a cofactor.

It catalyses the reaction XTP + H2O = XMP + diphosphate + H(+). The catalysed reaction is dITP + H2O = dIMP + diphosphate + H(+). The enzyme catalyses ITP + H2O = IMP + diphosphate + H(+). Pyrophosphatase that catalyzes the hydrolysis of nucleoside triphosphates to their monophosphate derivatives, with a high preference for the non-canonical purine nucleotides XTP (xanthosine triphosphate), dITP (deoxyinosine triphosphate) and ITP. Seems to function as a house-cleaning enzyme that removes non-canonical purine nucleotides from the nucleotide pool, thus preventing their incorporation into DNA/RNA and avoiding chromosomal lesions. The chain is dITP/XTP pyrophosphatase from Thermotoga maritima (strain ATCC 43589 / DSM 3109 / JCM 10099 / NBRC 100826 / MSB8).